A 313-amino-acid chain; its full sequence is 4-diphosphocytidyl-2-C-methyl-D-erythritol kinase (313 aa).

The active site involves K10. P95–S105 contacts ATP. D136 is a catalytic residue. Residues H289–T313 form a disordered region. The segment covering V292–R307 has biased composition (low complexity).

This sequence belongs to the GHMP kinase family. IspE subfamily.

It carries out the reaction 4-CDP-2-C-methyl-D-erythritol + ATP = 4-CDP-2-C-methyl-D-erythritol 2-phosphate + ADP + H(+). The protein operates within isoprenoid biosynthesis; isopentenyl diphosphate biosynthesis via DXP pathway; isopentenyl diphosphate from 1-deoxy-D-xylulose 5-phosphate: step 3/6. In terms of biological role, catalyzes the phosphorylation of the position 2 hydroxy group of 4-diphosphocytidyl-2C-methyl-D-erythritol. This chain is 4-diphosphocytidyl-2-C-methyl-D-erythritol kinase, found in Anaeromyxobacter dehalogenans (strain 2CP-C).